The chain runs to 198 residues: Ribonuclease HII (198 aa).

An RNase H type-2 domain is found at 9–198 (ITVAGADEAG…LLPDQLKIDF (190 aa)). Positions 15, 16, and 107 each coordinate a divalent metal cation.

It belongs to the RNase HII family. Requires Mn(2+) as cofactor. It depends on Mg(2+) as a cofactor.

It localises to the cytoplasm. It carries out the reaction Endonucleolytic cleavage to 5'-phosphomonoester.. Its function is as follows. Endonuclease that specifically degrades the RNA of RNA-DNA hybrids. In Christiangramia forsetii (strain DSM 17595 / CGMCC 1.15422 / KT0803) (Gramella forsetii), this protein is Ribonuclease HII.